The chain runs to 285 residues: Bifunctional protein FolD (285 aa).

Residues glycine 165 to serine 167, serine 190, and isoleucine 231 each bind NADP(+).

This sequence belongs to the tetrahydrofolate dehydrogenase/cyclohydrolase family. As to quaternary structure, homodimer.

The enzyme catalyses (6R)-5,10-methylene-5,6,7,8-tetrahydrofolate + NADP(+) = (6R)-5,10-methenyltetrahydrofolate + NADPH. It carries out the reaction (6R)-5,10-methenyltetrahydrofolate + H2O = (6R)-10-formyltetrahydrofolate + H(+). It functions in the pathway one-carbon metabolism; tetrahydrofolate interconversion. In terms of biological role, catalyzes the oxidation of 5,10-methylenetetrahydrofolate to 5,10-methenyltetrahydrofolate and then the hydrolysis of 5,10-methenyltetrahydrofolate to 10-formyltetrahydrofolate. The chain is Bifunctional protein FolD from Acetivibrio thermocellus (strain ATCC 27405 / DSM 1237 / JCM 9322 / NBRC 103400 / NCIMB 10682 / NRRL B-4536 / VPI 7372) (Clostridium thermocellum).